Here is a 421-residue protein sequence, read N- to C-terminus: UPF0415 protein C7orf25 homolog (421 aa).

It belongs to the UPF0415 family.

The sequence is that of UPF0415 protein C7orf25 homolog from Bos taurus (Bovine).